Consider the following 218-residue polypeptide: Guanylate kinase (218 aa).

The region spanning 15-194 is the Guanylate kinase-like domain; it reads GMMLVLSSPS…SIADVRAILR (180 aa). 22-29 serves as a coordination point for ATP; the sequence is SPSGAGKT.

The protein belongs to the guanylate kinase family.

It localises to the cytoplasm. The enzyme catalyses GMP + ATP = GDP + ADP. Its function is as follows. Essential for recycling GMP and indirectly, cGMP. This chain is Guanylate kinase, found in Rhodospirillum rubrum (strain ATCC 11170 / ATH 1.1.1 / DSM 467 / LMG 4362 / NCIMB 8255 / S1).